Here is a 248-residue protein sequence, read N- to C-terminus: Large ribosomal subunit protein uL29m (248 aa).

Disordered stretches follow at residues 77–107 and 223–248; these read VSKY…GFFG and AYEP…PPSS.

The protein belongs to the universal ribosomal protein uL29 family. As to quaternary structure, component of the mitochondrial large ribosomal subunit. Mature mitochondrial ribosomes consist of a small (37S) and a large (54S) subunit. The 37S subunit contains at least 33 different proteins and 1 molecule of RNA (15S). The 54S subunit contains at least 45 different proteins and 1 molecule of RNA (21S).

Its subcellular location is the mitochondrion. The protein is Large ribosomal subunit protein uL29m (MRPL4) of Ajellomyces capsulatus (strain NAm1 / WU24) (Darling's disease fungus).